A 484-amino-acid polypeptide reads, in one-letter code: UDP-N-acetylmuramoyl-L-alanyl-D-glutamate--L-lysine ligase (484 aa).

Serine 43 contacts UDP-N-acetyl-alpha-D-muramoyl-L-alanyl-D-glutamate. Residue 119-125 participates in ATP binding; sequence GTKGKTT. Residues 161–162, serine 188, and arginine 196 contribute to the UDP-N-acetyl-alpha-D-muramoyl-L-alanyl-D-glutamate site; that span reads TT. Lysine 230 bears the N6-carboxylysine mark. The short motif at 405 to 408 is the L-lysine recognition motif element; sequence DDPN.

The protein belongs to the MurCDEF family. MurE subfamily. In terms of processing, carboxylation is probably crucial for Mg(2+) binding and, consequently, for the gamma-phosphate positioning of ATP.

It localises to the cytoplasm. It catalyses the reaction UDP-N-acetyl-alpha-D-muramoyl-L-alanyl-D-glutamate + L-lysine + ATP = UDP-N-acetyl-alpha-D-muramoyl-L-alanyl-gamma-D-glutamyl-L-lysine + ADP + phosphate + H(+). It functions in the pathway cell wall biogenesis; peptidoglycan biosynthesis. In terms of biological role, catalyzes the addition of L-lysine to the nucleotide precursor UDP-N-acetylmuramoyl-L-alanyl-D-glutamate (UMAG) in the biosynthesis of bacterial cell-wall peptidoglycan. The sequence is that of UDP-N-acetylmuramoyl-L-alanyl-D-glutamate--L-lysine ligase from Streptococcus agalactiae serotype Ia (strain ATCC 27591 / A909 / CDC SS700).